Here is a 335-residue protein sequence, read N- to C-terminus: Putative T-box protein 7 (335 aa).

The segment at residues 73–246 (LWSTFLECGT…NNPFAKGFRN (174 aa)) is a DNA-binding region (T-box).

It localises to the nucleus. This Caenorhabditis elegans protein is Putative T-box protein 7.